We begin with the raw amino-acid sequence, 238 residues long: Xyloglucan-specific endo-beta-1,4-glucanase A (238 aa).

Residues 1–14 form the signal peptide; that stretch reads MKLSLLSLATLASA.

It belongs to the glycosyl hydrolase 12 (cellulase H) family.

It is found in the secreted. The enzyme catalyses xyloglucan + H2O = xyloglucan oligosaccharides.. Catalyzes endohydrolysis of 1,4-beta-D-glucosidic linkages in xyloglucan with retention of the beta-configuration of the glycosyl residues. Specific for xyloglucan and does not hydrolyze other cell wall components. This chain is Xyloglucan-specific endo-beta-1,4-glucanase A (xgeA), found in Aspergillus aculeatus.